Here is a 2196-residue protein sequence, read N- to C-terminus: Non-reducing polyketide synthase CTB1 (2196 aa).

The N-terminal acylcarrier protein transacylase domain (SAT) stretch occupies residues Ala-11 to His-250. The region spanning Lys-381–Asp-814 is the Ketosynthase family 3 (KS3) domain. Active-site for beta-ketoacyl synthase activity residues include Cys-553, His-688, and His-733. Positions Ala-922 to Lys-1223 are malonyl-CoA:ACP transacylase (MAT) domain. The interval Ser-1298–Val-1611 is product template (PT) domain. The interval His-1302 to Leu-1441 is N-terminal hotdog fold. The region spanning His-1302–His-1608 is the PKS/mFAS DH domain. His-1335 acts as the Proton acceptor; for dehydratase activity in catalysis. The tract at residues Thr-1460–His-1608 is C-terminal hotdog fold. The active-site Proton donor; for dehydratase activity is the Asp-1520. A disordered region spans residues Lys-1617–Lys-1666. Positions Thr-1623–Ala-1636 are enriched in basic and acidic residues. Carrier domains are found at residues Pro-1671–Ser-1748 and Asp-1775–Thr-1857. An O-(pantetheine 4'-phosphoryl)serine mark is found at Ser-1708 and Ser-1816. The span at Ser-1856–Pro-1867 shows a compositional bias: polar residues. Positions Ser-1856–Trp-1923 are disordered. Residues Ala-1872 to Ser-1887 are compositionally biased toward low complexity. Residues Ile-1937 to Met-2187 form a thioesterase (TE) domain region.

The cofactor is pantetheine 4'-phosphate.

The catalysed reaction is 6 malonyl-CoA + acetyl-CoA + 6 H(+) = nor-toralactone + 6 CO2 + 7 CoA + 2 H2O. Its pathway is mycotoxin biosynthesis. Polyketide synthase; part of the gene cluster that mediates the biosynthesis of cercosporin, a light-activated, non-host-selective toxin. The perylenequinone chromophore of cercosporin absorbs light energy to attain an electronically-activated triplet state and produces active oxygen species such as the hydroxyl radical, superoxide, hydrogen peroxide or singlet oxygen upon reaction with oxygen molecules. These reactive oxygen species cause damage to various cellular components including lipids, proteins and nucleic acids. The first step of cercosporin biosynthesis is performed by the polyketide synthase CTB1 which catalyzes the formation of nor-toralactone. The starter unit acyltransferase (SAT) domain of CTB1 initiates polyketide extension by the selective utilization of acetyl-CoA, which is elongated to the heptaketide in the beta-ketoacyl synthase (KS) domain by successive condensations with six malonyl units introduced by the malonyl acyltransferase (MAT) domain. The product template (PT) domain catalyzes C4-C9 and C2-C11 aldol cyclizations and dehydrations to a trihydroxynaphthalene, which is thought to be delivered to the thioesterase (TE) domain for product release. The bifunctional enzyme CTB3 then methylates nor-toralactone to toralactone before conducting an unusual oxidative aromatic ring opening. The O-methyltransferase CTB2 further methylates the nascent OH-6 of the CBT3 product, blocking further oxidation at this site before the reductase CTB6 reduces the 2-oxopropyl ketone at position C7, giving naphthalene. The FAD-dependent monooxygenase CTB5 in concert with the multicopper oxidase CTB12 are responsible for homodimerization of naphthalene with CTB7 installing the dioxepine moiety, finally producing cercosporin. The fasciclin domain-containing protein CTB11 might act with CTB5 and CTB12 whereas the roles of CTB9 and CTB10 have still to be elucidated. In Cercospora nicotianae (Barn spot disease fungus), this protein is Non-reducing polyketide synthase CTB1.